Reading from the N-terminus, the 188-residue chain is Peptidyl-tRNA hydrolase (188 aa).

Phe15 contacts tRNA. Residue His20 is the Proton acceptor of the active site. 3 residues coordinate tRNA: Tyr64, Asn66, and Asn112.

This sequence belongs to the PTH family. Monomer.

It localises to the cytoplasm. It catalyses the reaction an N-acyl-L-alpha-aminoacyl-tRNA + H2O = an N-acyl-L-amino acid + a tRNA + H(+). Functionally, hydrolyzes ribosome-free peptidyl-tRNAs (with 1 or more amino acids incorporated), which drop off the ribosome during protein synthesis, or as a result of ribosome stalling. In terms of biological role, catalyzes the release of premature peptidyl moieties from peptidyl-tRNA molecules trapped in stalled 50S ribosomal subunits, and thus maintains levels of free tRNAs and 50S ribosomes. The chain is Peptidyl-tRNA hydrolase from Borreliella afzelii (strain PKo) (Borrelia afzelii).